Consider the following 282-residue polypeptide: Transformer-2 protein homolog alpha (282 aa).

The interval 1–118 (MSDVEENNFE…TGSRANPDPN (118 aa)) is disordered. Residue Ser-2 is modified to N-acetylserine. Residues Ser-2 and Ser-14 each carry the phosphoserine modification. Thr-24 bears the Phosphothreonine mark. The segment covering 51-84 (RSRSKSRSRSRRHSHRRYTRSRSHSHSHRRRSRS) has biased composition (basic residues). Phosphoserine is present on residues Ser-82, Ser-84, and Ser-86. The residue at position 88 (Thr-88) is a Phosphothreonine. The span at 92 to 110 (RRRRSRSHSPMSNRRRHTG) shows a compositional bias: basic residues. Residues Ser-96 and Ser-98 each carry the phosphoserine modification. One can recognise an RRM domain in the interval 119–197 (TCLGVFGLSL…RRIRVDYSIT (79 aa)). Residue Lys-198 forms a Glycyl lysine isopeptide (Lys-Gly) (interchain with G-Cter in SUMO2) linkage. Residues 198-225 (KRAHTPTPGIYMGRPTHSGGGGGGGGGG) are linker. 2 disordered regions span residues 201–245 (HTPT…YDRG) and 260–282 (SPSPYYSRYRSRSRSRSYSPRRY). Phosphothreonine occurs at positions 202 and 204. Gly residues predominate over residues 215–230 (SGGGGGGGGGGGGGGG). Arg-232 bears the Omega-N-methylarginine mark. Positions 232 to 245 (RRRDSYYDRGYDRG) are enriched in basic and acidic residues. The residue at position 236 (Ser-236) is a Phosphoserine. Basic residues predominate over residues 268-282 (YRSRSRSRSYSPRRY).

This sequence belongs to the splicing factor SR family. In terms of assembly, binds to A3 enhancer proteins SRp75, SRp55, SRp40 and SRp30. Interacts with ILDR1 (via C-terminus) and ILDR2. Post-translationally, phosphorylated in the RS domains.

The protein resides in the nucleus. Sequence-specific RNA-binding protein which participates in the control of pre-mRNA splicing. In Homo sapiens (Human), this protein is Transformer-2 protein homolog alpha.